A 392-amino-acid polypeptide reads, in one-letter code: Methylthioribose-1-phosphate isomerase (392 aa).

The active-site Proton donor is the Asp-267.

Belongs to the eIF-2B alpha/beta/delta subunits family. MtnA subfamily.

The protein localises to the cytoplasm. Its subcellular location is the nucleus. It carries out the reaction 5-(methylsulfanyl)-alpha-D-ribose 1-phosphate = 5-(methylsulfanyl)-D-ribulose 1-phosphate. It participates in amino-acid biosynthesis; L-methionine biosynthesis via salvage pathway; L-methionine from S-methyl-5-thio-alpha-D-ribose 1-phosphate: step 1/6. Its function is as follows. Catalyzes the interconversion of methylthioribose-1-phosphate (MTR-1-P) into methylthioribulose-1-phosphate (MTRu-1-P). The protein is Methylthioribose-1-phosphate isomerase of Ajellomyces dermatitidis (strain ER-3 / ATCC MYA-2586) (Blastomyces dermatitidis).